Reading from the N-terminus, the 1099-residue chain is ATP-dependent helicase/deoxyribonuclease subunit B (1099 aa).

[4Fe-4S] cluster is bound by residues Cys766, Cys1056, Cys1059, and Cys1065.

This sequence belongs to the helicase family. AddB/RexB type 2 subfamily. In terms of assembly, heterodimer of AddA and RexB. It depends on Mg(2+) as a cofactor. [4Fe-4S] cluster is required as a cofactor.

Its function is as follows. The heterodimer acts as both an ATP-dependent DNA helicase and an ATP-dependent, dual-direction single-stranded exonuclease. Recognizes the chi site generating a DNA molecule suitable for the initiation of homologous recombination. This subunit has 5' -&gt; 3' nuclease activity but not helicase activity. The polypeptide is ATP-dependent helicase/deoxyribonuclease subunit B (Lactococcus lactis subsp. lactis (strain IL1403) (Streptococcus lactis)).